The primary structure comprises 600 residues: Aspartate--tRNA(Asp/Asn) ligase (600 aa).

Residue E176 participates in L-aspartate binding. The segment at 200 to 203 (QQFK) is aspartate. L-aspartate contacts are provided by R222 and H452. ATP is bound at residue 222-224 (RDE). E490 contributes to the ATP binding site. R497 contributes to the L-aspartate binding site. 542–545 (GIDR) serves as a coordination point for ATP.

It belongs to the class-II aminoacyl-tRNA synthetase family. Type 1 subfamily. As to quaternary structure, homodimer.

The protein localises to the cytoplasm. The catalysed reaction is tRNA(Asx) + L-aspartate + ATP = L-aspartyl-tRNA(Asx) + AMP + diphosphate. Functionally, aspartyl-tRNA synthetase with relaxed tRNA specificity since it is able to aspartylate not only its cognate tRNA(Asp) but also tRNA(Asn). Reaction proceeds in two steps: L-aspartate is first activated by ATP to form Asp-AMP and then transferred to the acceptor end of tRNA(Asp/Asn). The protein is Aspartate--tRNA(Asp/Asn) ligase of Rickettsia felis (strain ATCC VR-1525 / URRWXCal2) (Rickettsia azadi).